The primary structure comprises 69 residues: Large ribosomal subunit protein bL32c (69 aa).

The protein belongs to the bacterial ribosomal protein bL32 family.

It localises to the plastid. Its subcellular location is the chloroplast. This chain is Large ribosomal subunit protein bL32c (rpl32), found in Anthoceros angustus (Hornwort).